Reading from the N-terminus, the 302-residue chain is Protein FdhE homolog (302 aa).

This sequence belongs to the FdhE family.

The protein resides in the cytoplasm. Necessary for formate dehydrogenase activity. The polypeptide is Protein FdhE homolog (Haemophilus influenzae (strain PittGG)).